The following is a 160-amino-acid chain: Cytochrome c-type biogenesis protein CcmE (160 aa).

Residues 1 to 9 (MRGLKKKRR) lie on the Cytoplasmic side of the membrane. A helical; Signal-anchor for type II membrane protein membrane pass occupies residues 10–30 (IQIIAIAAVALTIATIMIGTA). Over 31–160 (MRDGINFFRS…DGGYGGASGS (130 aa)) the chain is Periplasmic. Residues histidine 123 and tyrosine 127 each contribute to the heme site. The disordered stretch occupies residues 141-160 (VYKDPNATDADGGYGGASGS).

This sequence belongs to the CcmE/CycJ family.

The protein localises to the cell inner membrane. Its function is as follows. Heme chaperone required for the biogenesis of c-type cytochromes. Transiently binds heme delivered by CcmC and transfers the heme to apo-cytochromes in a process facilitated by CcmF and CcmH. The protein is Cytochrome c-type biogenesis protein CcmE of Dinoroseobacter shibae (strain DSM 16493 / NCIMB 14021 / DFL 12).